The following is a 336-amino-acid chain: Biotin synthase (336 aa).

The 228-residue stretch at 54 to 281 (NAIQLSTLLS…KAMVRLSAGR (228 aa)) folds into the Radical SAM core domain. [4Fe-4S] cluster-binding residues include Cys69, Cys73, and Cys76. Positions 113, 144, 204, and 276 each coordinate [2Fe-2S] cluster.

This sequence belongs to the radical SAM superfamily. Biotin synthase family. In terms of assembly, homodimer. The cofactor is [4Fe-4S] cluster. It depends on [2Fe-2S] cluster as a cofactor.

It carries out the reaction (4R,5S)-dethiobiotin + (sulfur carrier)-SH + 2 reduced [2Fe-2S]-[ferredoxin] + 2 S-adenosyl-L-methionine = (sulfur carrier)-H + biotin + 2 5'-deoxyadenosine + 2 L-methionine + 2 oxidized [2Fe-2S]-[ferredoxin]. The protein operates within cofactor biosynthesis; biotin biosynthesis; biotin from 7,8-diaminononanoate: step 2/2. Catalyzes the conversion of dethiobiotin (DTB) to biotin by the insertion of a sulfur atom into dethiobiotin via a radical-based mechanism. The polypeptide is Biotin synthase (Burkholderia mallei (strain ATCC 23344)).